A 351-amino-acid polypeptide reads, in one-letter code: MLKNDLFLRALKRQPCSRTPIWVMRQAGRYLPEYRAIREKTDFLTLCKTPELAAEVTIQPVELMGVDAAIIFSDILVVNEAMGMDVEIIETKGIKLSPPIRSQVDIDRLSVPDVHDKLGYVLDAIRLTKKELDNRVPLIGFSGAAWTLFTYAVEGGGSKNYAFAKKMMFRDPKMAHMLLSKISSVISDYVCAQVEAGADAIQIFDSWASALSEDDYREFALPYIKENVQALKTKYPDIPVIVFSKDCNTILEDIAATGCDAVGLGWGIDIAKARTILGDRVCLQGNMDPTVLYGTPEKIKAEAGKILKQFGQHTANSGHVFNLGHGILPDVDPANLKLLVEFVKEESAKYH.

Substrate-binding positions include R25–R29, D74, Y151, S206, and H325.

This sequence belongs to the uroporphyrinogen decarboxylase family. As to quaternary structure, homodimer.

The protein localises to the cytoplasm. It carries out the reaction uroporphyrinogen III + 4 H(+) = coproporphyrinogen III + 4 CO2. It functions in the pathway porphyrin-containing compound metabolism; protoporphyrin-IX biosynthesis; coproporphyrinogen-III from 5-aminolevulinate: step 4/4. In terms of biological role, catalyzes the decarboxylation of four acetate groups of uroporphyrinogen-III to yield coproporphyrinogen-III. This is Uroporphyrinogen decarboxylase from Chlorobium phaeovibrioides (strain DSM 265 / 1930) (Prosthecochloris vibrioformis (strain DSM 265)).